The chain runs to 1008 residues: Collagen alpha-2(I) chain (1008 aa).

The disordered stretch occupies residues 1 to 999; sequence GGFDFSFLPQ…IRGSGGGYDF (999 aa). 4 positions are modified to 4-hydroxyproline: Pro-9, Pro-12, Pro-45, and Pro-51. A compositionally biased stretch (low complexity) spans 38-81; the sequence is LMGPRGPPGASGAPGPQGFPAGEPGEPGQTGPAGARGPAGPPGK. Residues 82 to 94 show a composition bias toward basic and acidic residues; it reads ADGHPGKPGRPGE. Lys-116 carries the post-translational modification 5-hydroxylysine; alternate. O-linked (Gal...) hydroxylysine; alternate glycosylation is present at Lys-116. Composition is skewed to low complexity over residues 164–193, 239–260, and 301–314; these read VGAPGPAGARGSDGSVGPVGPAGPIGSAGP, PGANGLTGAKGAAGLPGVAGAP, and EPGSAGPQGPPGSS. The span at 336 to 345 shows a compositional bias: gly residues; the sequence is GLRGGPGSRG. The span at 358–374 shows a compositional bias: low complexity; sequence PAGARGASGPAGVRGPS. 2 positions are modified to 4-hydroxyproline: Pro-380 and Pro-383. Residues 409–428 are compositionally biased toward low complexity; that stretch reads LPGIDGRPGPIGPAGARGEA. A compositionally biased stretch (gly residues) spans 455–466; the sequence is GNRGQGGKGEQG. Composition is skewed to low complexity over residues 513–530 and 542–552; these read PGESGAVGPSGAIGSRGP and EPGVVGAPGTA. A compositionally biased stretch (gly residues) spans 553–562; that stretch reads GPAGSGGLPG. 2 stretches are compositionally biased toward low complexity: residues 582 to 629 and 636 to 656; these read RGEV…PRGS and VGPAGPNGFAGPAGAAGQPGA. Residues 657–666 show a composition bias toward basic and acidic residues; sequence KGERGTKGPK. The segment covering 674 to 684 has biased composition (low complexity); the sequence is PTGPVGSAGPA. Over residues 694–703 the composition is skewed to gly residues; that stretch reads GSRGDGGPPG. A compositionally biased stretch (low complexity) spans 704-714; it reads ATGFPGAAGRT. The segment covering 751–760 has biased composition (gly residues); that stretch reads GETGAGGPPG. 5 stretches are compositionally biased toward low complexity: residues 768–795, 803–813, 826–842, 862–884, and 892–907; these read SGEPGTAGPPGTAGPQGLLGAPGILGLP, LPGVAGAVGEP, PPGAVGSPGVNGAPGNP, YAGNAGPVGAAGAPGPHGTVGPA, and EPGPVGSVGPVGALGP. Residues 917-928 are compositionally biased toward basic and acidic residues; that stretch reads RGDKGEPGDKGP. The span at 989–998 shows a compositional bias: gly residues; the sequence is GIRGSGGGYD.

Belongs to the fibrillar collagen family. In terms of assembly, trimers of one alpha 2(I) and two alpha 1(I) chains. Interacts (via C-terminus) with TMEM131 (via PapD-L domain); the interaction is direct and is involved in assembly and TRAPPIII ER-to-Golgi transport complex-dependent secretion of collagen. In terms of processing, prolines at the third position of the tripeptide repeating unit (G-X-Y) are hydroxylated in some or all of the chains. In terms of tissue distribution, expressed in bones.

It is found in the secreted. The protein localises to the extracellular space. The protein resides in the extracellular matrix. In terms of biological role, type I collagen is a member of group I collagen (fibrillar forming collagen). This Nothrotheriops shastensis (Shasta ground sloth) protein is Collagen alpha-2(I) chain.